A 308-amino-acid chain; its full sequence is Eukaryotic translation initiation factor 3 subunit G (308 aa).

Residues 1–23 (MAPVAAPSTSQPAGGKPMNWADE) form a disordered region. One can recognise an RRM domain in the interval 225–303 (PTLRVTNLSE…LILSCQWSLP (79 aa)).

It belongs to the eIF-3 subunit G family. In terms of assembly, component of the eukaryotic translation initiation factor 3 (eIF-3) complex.

The protein localises to the cytoplasm. Functionally, RNA-binding component of the eukaryotic translation initiation factor 3 (eIF-3) complex, which is involved in protein synthesis of a specialized repertoire of mRNAs and, together with other initiation factors, stimulates binding of mRNA and methionyl-tRNAi to the 40S ribosome. The eIF-3 complex specifically targets and initiates translation of a subset of mRNAs involved in cell proliferation. This subunit can bind 18S rRNA. The chain is Eukaryotic translation initiation factor 3 subunit G from Mycosarcoma maydis (Corn smut fungus).